Reading from the N-terminus, the 59-residue chain is Temporin-CDYd (59 aa).

The signal sequence occupies residues Met-1 to Cys-22. Positions Glu-23 to Glu-42 are excised as a propeptide.

Belongs to the frog skin active peptide (FSAP) family. Temporin subfamily. Expressed by the skin glands.

It localises to the secreted. In terms of biological role, antimicrobial peptide. This is Temporin-CDYd from Rana dybowskii (Dybovsky's frog).